A 976-amino-acid chain; its full sequence is Ephrin type-A receptor 2 (976 aa).

A signal peptide spans Met1–Ala23. The tract at residues Met1–Gln206 is mediates interaction with CLDN4. The Extracellular segment spans residues Gln25–Val537. Residues Glu28 to Gln206 form the Eph LBD domain. Cystine bridges form between Cys70–Cys188 and Cys105–Cys115. In terms of domain architecture, Fibronectin type-III 1 spans Pro328–Val432. 2 N-linked (GlcNAc...) asparagine glycosylation sites follow: Asn407 and Asn435. A Fibronectin type-III 2 domain is found at Glu438 to Pro529. A helical membrane pass occupies residues Ile538–Ile558. The Cytoplasmic portion of the chain corresponds to His559 to Ile976. Residue Ser570 is modified to Phosphoserine. Phosphotyrosine is present on Tyr575. The residue at position 579 (Ser579) is a Phosphoserine. At Tyr588 the chain carries Phosphotyrosine; by autocatalysis. Tyr594 bears the Phosphotyrosine mark. The interval Thr606–Phe906 is mediates interaction with ARHGEF16. In terms of domain architecture, Protein kinase spans Val613–Ile875. Ile619–Val627 is an ATP binding site. The residue at position 628 (Tyr628) is a Phosphotyrosine. Lys646 serves as a coordination point for ATP. Residue Thr647 is modified to Phosphothreonine. The residue at position 735 (Tyr735) is a Phosphotyrosine; by autocatalysis. Asp739 functions as the Proton acceptor in the catalytic mechanism. Phosphotyrosine is present on Tyr772. 4 positions are modified to phosphoserine: Ser869, Ser892, Ser897, and Ser901. The negatively regulates interaction with ARHGEF16 stretch occupies residues Asp886–Ile976. In terms of domain architecture, SAM spans Val904 to Gln968. At Tyr921 the chain carries Phosphotyrosine; by autocatalysis. Residue Tyr930 is modified to Phosphotyrosine. The short motif at Ile974 to Ile976 is the PDZ-binding element.

The protein belongs to the protein kinase superfamily. Tyr protein kinase family. Ephrin receptor subfamily. Homodimer. Interacts with SLA. Interacts (phosphorylated form) with VAV2, VAV3 and PI3-kinase p85 subunit (PIK3R1, PIK3R2 or PIK3R3); critical for the EFNA1-induced activation of RAC1 which stimulates cell migration. Interacts with INPPL1; regulates activated EPHA2 endocytosis and degradation. Interacts (inactivated form) with PTK2/FAK1 and interacts (EFNA1 ligand-activated form) with PTPN11; regulates integrin-mediated adhesion. Interacts with ARHGEF16, DOCK4 and ELMO2; mediates ligand-independent activation of RAC1 which stimulates cell migration. Interacts with CLDN4; phosphorylates CLDN4 and may regulate tight junctions. Interacts with ACP1. Interacts with ANKS1A. Interacts with CEMIP. Interacts with NCK1; may regulate EPHA2 activity in cell migration and adhesion. Interacts with TIMD4. In terms of processing, autophosphorylates. Phosphorylated on tyrosine upon binding and activation by EFNA1. Phosphorylated residues Tyr-588 and Tyr-594 are required for binding VAV2 and VAV3 while phosphorylated residues Tyr-735 and Tyr-930 are required for binding PI3-kinase p85 subunit (PIK3R1, PIK3R2 or PIK3R3). These phosphorylated residues are critical for recruitment of VAV2 and VAV3 and PI3-kinase p85 subunit which transduce downstream signaling to activate RAC1 GTPase and cell migration. Dephosphorylation of Tyr-930 by PTPRF prevents the interaction of EPHA2 with NCK1. Phosphorylated at Ser-897 by PKB; serum-induced phosphorylation which targets EPHA2 to the cell leading edge and stimulates cell migration. Phosphorylation by PKB is inhibited by EFNA1-activated EPHA2 which regulates PKB activity via a reciprocal regulatory loop. Phosphorylated at Ser-897 in response to TNF by RPS6KA1 and RPS6KA3; RPS6KA-EPHA2 signaling pathway controls cell migration. Phosphorylated at Ser-897 by PKA; blocks cell retraction induced by EPHA2 kinase activity. Dephosphorylated by ACP1. Ubiquitinated by CHIP/STUB1. Ubiquitination is regulated by the HSP90 chaperone and regulates the receptor stability and activity through proteasomal degradation. ANKS1A prevents ubiquitination and degradation.

It is found in the cell membrane. It localises to the cell projection. The protein localises to the ruffle membrane. The protein resides in the lamellipodium membrane. Its subcellular location is the cell junction. It is found in the focal adhesion. The enzyme catalyses L-tyrosyl-[protein] + ATP = O-phospho-L-tyrosyl-[protein] + ADP + H(+). Receptor tyrosine kinase which binds promiscuously membrane-bound ephrin-A family ligands residing on adjacent cells, leading to contact-dependent bidirectional signaling into neighboring cells. The signaling pathway downstream of the receptor is referred to as forward signaling while the signaling pathway downstream of the ephrin ligand is referred to as reverse signaling. Activated by the ligand ephrin-A1/EFNA1 regulates migration, integrin-mediated adhesion, proliferation and differentiation of cells. Regulates cell adhesion and differentiation through DSG1/desmoglein-1 and inhibition of the ERK1/ERK2 signaling pathway. May also participate in UV radiation-induced apoptosis and have a ligand-independent stimulatory effect on chemotactic cell migration. During development, may function in distinctive aspects of pattern formation and subsequently in development of several fetal tissues. Involved for instance in angiogenesis, in early hindbrain development and epithelial proliferation and branching morphogenesis during mammary gland development. Engaged by the ligand ephrin-A5/EFNA5 may regulate lens fiber cells shape and interactions and be important for lens transparency development and maintenance. With ephrin-A2/EFNA2 may play a role in bone remodeling through regulation of osteoclastogenesis and osteoblastogenesis. The chain is Ephrin type-A receptor 2 (EPHA2) from Macaca fascicularis (Crab-eating macaque).